Consider the following 428-residue polypeptide: Glutamate-1-semialdehyde 2,1-aminomutase (428 aa).

Lysine 265 is subject to N6-(pyridoxal phosphate)lysine.

This sequence belongs to the class-III pyridoxal-phosphate-dependent aminotransferase family. HemL subfamily. As to quaternary structure, homodimer. It depends on pyridoxal 5'-phosphate as a cofactor.

Its subcellular location is the cytoplasm. The catalysed reaction is (S)-4-amino-5-oxopentanoate = 5-aminolevulinate. It functions in the pathway porphyrin-containing compound metabolism; protoporphyrin-IX biosynthesis; 5-aminolevulinate from L-glutamyl-tRNA(Glu): step 2/2. The sequence is that of Glutamate-1-semialdehyde 2,1-aminomutase from Methylobacillus flagellatus (strain ATCC 51484 / DSM 6875 / VKM B-1610 / KT).